A 673-amino-acid chain; its full sequence is Protein kinase ORF74 (673 aa).

Residues 128 to 404 (TDTDEAVARG…ARELLVYPRY (277 aa)) enclose the Protein kinase domain. Asp-252 serves as the catalytic Proton acceptor. The disordered stretch occupies residues 340–364 (MDNDALDSRRTGRDGDPVNPEGFGT). Positions 345–355 (LDSRRTGRDGD) are enriched in basic and acidic residues.

The protein belongs to the protein kinase superfamily. Ser/Thr protein kinase family.

It catalyses the reaction L-seryl-[protein] + ATP = O-phospho-L-seryl-[protein] + ADP + H(+). The enzyme catalyses L-threonyl-[protein] + ATP = O-phospho-L-threonyl-[protein] + ADP + H(+). The sequence is that of Protein kinase ORF74 (ORF74) from Ictalurid herpesvirus 1 (strain Auburn) (IcHV-1).